The primary structure comprises 676 residues: Methionine--tRNA ligase (676 aa).

A 'HIGH' region motif is present at residues 15 to 25 (PYANGPIHLGH). Residues cysteine 146, cysteine 149, cysteine 159, and cysteine 162 each coordinate Zn(2+). A 'KMSKS' region motif is present at residues 332–336 (KMSKS). Lysine 335 provides a ligand contact to ATP. The region spanning 575-676 (DFAKIDLRIA…EGAQPGMRVK (102 aa)) is the tRNA-binding domain.

The protein belongs to the class-I aminoacyl-tRNA synthetase family. MetG type 1 subfamily. Homodimer. The cofactor is Zn(2+).

Its subcellular location is the cytoplasm. The enzyme catalyses tRNA(Met) + L-methionine + ATP = L-methionyl-tRNA(Met) + AMP + diphosphate. Is required not only for elongation of protein synthesis but also for the initiation of all mRNA translation through initiator tRNA(fMet) aminoacylation. This is Methionine--tRNA ligase from Shewanella sp. (strain ANA-3).